The chain runs to 327 residues: DNA-directed RNA polymerase subunit alpha (327 aa).

An alpha N-terminal domain (alpha-NTD) region spans residues Met-1 to Glu-233. The tract at residues Lys-265–Lys-327 is alpha C-terminal domain (alpha-CTD).

This sequence belongs to the RNA polymerase alpha chain family. As to quaternary structure, in plastids the minimal PEP RNA polymerase catalytic core is composed of four subunits: alpha, beta, beta', and beta''. When a (nuclear-encoded) sigma factor is associated with the core the holoenzyme is formed, which can initiate transcription.

The protein localises to the plastid. It is found in the chloroplast. It catalyses the reaction RNA(n) + a ribonucleoside 5'-triphosphate = RNA(n+1) + diphosphate. In terms of biological role, DNA-dependent RNA polymerase catalyzes the transcription of DNA into RNA using the four ribonucleoside triphosphates as substrates. This Olimarabidopsis pumila (Dwarf rocket) protein is DNA-directed RNA polymerase subunit alpha.